The primary structure comprises 693 residues: Zinc finger BED domain-containing protein 5 (693 aa).

Residues 108 to 164 (RKYDESYLSFGFTYFGNRDAPHAQCVLCKKILSNSSLAPSKLRRHLETKHAAYKDKD) form a BED-type zinc finger. 4 residues coordinate Zn(2+): C132, C135, H152, and H157.

This chain is Zinc finger BED domain-containing protein 5 (ZBED5), found in Homo sapiens (Human).